A 313-amino-acid chain; its full sequence is D-alanine--D-alanine ligase (313 aa).

Residues 108-308 form the ATP-grasp domain; the sequence is KLVWQQTGVP…YSELVVKVLS (201 aa). Residue 138-193 coordinates ATP; that stretch reads VAKLGLPLFVKPASEGSSVAVLKVKTADALPAALAEAATHDKIVIVEKSIEGGGEY. Asp-262, Glu-275, and Asn-277 together coordinate Mg(2+).

It belongs to the D-alanine--D-alanine ligase family. The cofactor is Mg(2+). Requires Mn(2+) as cofactor.

Its subcellular location is the cytoplasm. The enzyme catalyses 2 D-alanine + ATP = D-alanyl-D-alanine + ADP + phosphate + H(+). It functions in the pathway cell wall biogenesis; peptidoglycan biosynthesis. Functionally, cell wall formation. In Burkholderia orbicola (strain MC0-3), this protein is D-alanine--D-alanine ligase.